The sequence spans 548 residues: Eukaryotic translation initiation factor 3 subunit D (548 aa).

Lys-53 is subject to N6-acetyllysine. Position 161 is a phosphoserine (Ser-161). Residues 285–299 form an RNA gate region; it reads DFDLPTVSETANEPP. 2 disordered regions span residues 288–309 and 523–548; these read LPTV…FNSP and PDGT…EEET. The segment covering 291-309 has biased composition (polar residues); it reads VSETANEPPQDEGNSFNSP. A phosphoserine mark is found at Ser-528 and Ser-529. Acidic residues predominate over residues 529–548; the sequence is SDEDEEEEEEEEEEEEEEET.

It belongs to the eIF-3 subunit D family. In terms of assembly, component of the eukaryotic translation initiation factor 3 (eIF-3) complex, which is composed of 13 subunits: EIF3A, EIF3B, EIF3C, EIF3D, EIF3E, EIF3F, EIF3G, EIF3H, EIF3I, EIF3J, EIF3K, EIF3L and EIF3M. The eIF-3 complex appears to include 3 stable modules: module A is composed of EIF3A, EIF3B, EIF3G and EIF3I; module B is composed of EIF3F, EIF3H, and EIF3M; and module C is composed of EIF3C, EIF3D, EIF3E, EIF3K and EIF3L. EIF3C of module C binds EIF3B of module A and EIF3H of module B, thereby linking the three modules. EIF3J is a labile subunit that binds to the eIF-3 complex via EIF3B. The eIF-3 complex interacts with RPS6KB1 under conditions of nutrient depletion. Mitogenic stimulation leads to binding and activation of a complex composed of MTOR and RPTOR, leading to phosphorylation and release of RPS6KB1 and binding of EIF4B to eIF-3.

It localises to the cytoplasm. MRNA cap-binding component of the eukaryotic translation initiation factor 3 (eIF-3) complex, a complex required for several steps in the initiation of protein synthesis of a specialized repertoire of mRNAs. The eIF-3 complex associates with the 40S ribosome and facilitates the recruitment of eIF-1, eIF-1A, eIF-2:GTP:methionyl-tRNAi and eIF-5 to form the 43S pre-initiation complex (43S PIC). The eIF-3 complex stimulates mRNA recruitment to the 43S PIC and scanning of the mRNA for AUG recognition. The eIF-3 complex is also required for disassembly and recycling of post-termination ribosomal complexes and subsequently prevents premature joining of the 40S and 60S ribosomal subunits prior to initiation. The eIF-3 complex specifically targets and initiates translation of a subset of mRNAs involved in cell proliferation, including cell cycling, differentiation and apoptosis, and uses different modes of RNA stem-loop binding to exert either translational activation or repression. In the eIF-3 complex, EIF3D specifically recognizes and binds the 7-methylguanosine cap of a subset of mRNAs. In Pongo abelii (Sumatran orangutan), this protein is Eukaryotic translation initiation factor 3 subunit D.